Reading from the N-terminus, the 351-residue chain is Cytosolic sulfotransferase 11 (351 aa).

98-103 (KGGTTW) provides a ligand contact to 3'-phosphoadenylyl sulfate. The Proton acceptor role is filled by H163. Residues R184, S192, Y250, and 316 to 318 (RKG) each bind 3'-phosphoadenylyl sulfate.

It belongs to the sulfotransferase 1 family.

Its subcellular location is the cytoplasm. Sulfotransferase that utilizes 3'-phospho-5'-adenylyl sulfate (PAPS) as sulfonate donor. The chain is Cytosolic sulfotransferase 11 (SOT11) from Arabidopsis thaliana (Mouse-ear cress).